The chain runs to 210 residues: Thymidylate kinase (210 aa).

11 to 18 (GVDGSGKS) is a binding site for ATP.

It belongs to the thymidylate kinase family.

The enzyme catalyses dTMP + ATP = dTDP + ADP. Its function is as follows. Phosphorylation of dTMP to form dTDP in both de novo and salvage pathways of dTTP synthesis. In Mycoplasmoides gallisepticum (strain R(low / passage 15 / clone 2)) (Mycoplasma gallisepticum), this protein is Thymidylate kinase.